Consider the following 817-residue polypeptide: Two pore calcium channel protein 1 (817 aa).

Residues 1 to 101 (MSVILDDDVL…PKDARALAAY (101 aa)) are Cytoplasmic-facing. The segment at 22 to 66 (PLTPSNGLGQEDLPSKNGGGQSGPNSQVPSLVSGADSPPSSPPGH) is disordered. A helical membrane pass occupies residues 102–122 (LFVHNHFFYMMELLTALLLLL). The Extracellular portion of the chain corresponds to 123 to 137 (LSLCESPAVPALKLR). Residues 138-158 (TYVHATLELFALMVVVFELCM) form a helical membrane-spanning segment. Residues 159–172 (KLRWLGFHTFVRHK) are Cytoplasmic-facing. Residues 173 to 193 (RTMVKTSVLVVQFIEAIVVLV) form a helical membrane-spanning segment. Topologically, residues 194 to 202 (RQTSHVRVT) are extracellular. A helical transmembrane segment spans residues 203–221 (RALRCIFLVDCRYCGGVRR). The Cytoplasmic segment spans residues 222-235 (NLRQIFQSLPPFMD). Residues 236 to 256 (ILLLLLFFMIIFAILGFYLFS) form a helical membrane-spanning segment. Over 257–263 (TNPSDPY) the chain is Extracellular. Residues 264–287 (FNTLENSIVNLFVLLTTANFPDVM) constitute an intramembrane region (helical; Pore-forming). Topologically, residues 288 to 298 (MPSYSRNPWSC) are extracellular. The helical transmembrane segment at 299–319 (VFFIVYLSIELYFIMNLLLAV) threads the bilayer. Residues 320 to 445 (VFDTFNDIEK…NILVNSKAFQ (126 aa)) are Cytoplasmic-facing. Residues 446–466 (YFMYLVVAVNGVWILVETFML) traverse the membrane as a helical segment. At 467–480 (KGGNFISKHVPWSY) the chain is on the extracellular side. The chain crosses the membrane as a helical span at residues 481–501 (LVFLTIYGVELFMKVAGLGPV). Residues 502–504 (EYL) lie on the Cytoplasmic side of the membrane. A helical membrane pass occupies residues 505–527 (SSGWNLFDFSVTAFAFLGLLALT). The Extracellular portion of the chain corresponds to 528 to 535 (LNMEPFYF). The chain crosses the membrane as a helical span at residues 536–550 (IVVLRPLQLLRLFKL). Residues 551-574 (KKRYRNVLDTMFELLPRMASLGLT) lie on the Cytoplasmic side of the membrane. A helical membrane pass occupies residues 575–595 (LLTFYYSFAIVGMEFFSGRLS). Topologically, residues 596 to 630 (PNCCNSSTVADAYRFINHTVGNKTKVEEGYYYLNN) are extracellular. The helical; Pore-forming intramembrane region spans 631-654 (FDNILNSFVTLFELTVVNNWYIIM). The Extracellular segment spans residues 655-671 (EGVTSQTSHWSRLYFMT). A helical transmembrane segment spans residues 672 to 692 (FYIVTMVVMTIIVAFILEAFV). Residues 693–817 (FRMNYSRKSQ…GSRQRSQTVT (125 aa)) lie on the Cytoplasmic side of the membrane. Positions 770 to 794 (SLKMYQEEIQEWYEEHAREQEQQQL) form a coiled coil. The interval 785 to 817 (HAREQEQQQLRGSAPSPAAQQTPGSRQRSQTVT) is disordered. Residues 802–817 (AAQQTPGSRQRSQTVT) show a composition bias toward polar residues.

Belongs to the calcium channel alpha-1 subunit (TC 1.A.1.11) family. Two pore calcium channel subfamily. As to quaternary structure, dimer. Interacts with MTOR; the interaction is required for TPCN1 ATP sensitivity. Interacts with STX7, STX8 and STX12. Interacts with JPT2. Found in a complex with LSM12, TPCN1 and TPCN2. Post-translationally, N-glycosylated. In terms of tissue distribution, widely expressed. Expressed at relatively high level in kidney, liver and lung, and in the kidney it is expressed at inner medullary collecting ducts.

It is found in the lysosome membrane. Its subcellular location is the endosome membrane. It localises to the early endosome membrane. The protein localises to the recycling endosome membrane. It catalyses the reaction Na(+)(in) = Na(+)(out). The enzyme catalyses Ca(2+)(in) = Ca(2+)(out). Na(+) current is inhibited by ATP in a MTORC-dependent manner. ATP sensitivity is independent of PI(3,5)P2. Probably regulated by Mg(2+) ions, cytosolic Mg(2+) selectively inhibits outward current while lysosomal Mg(2+) modestly inhibits both the outward and inward currents. In the absence of Mg(2+), NAADP readily activates TPCN2, with properties similar to PI(3,5)P2. Both current elicited by PI(3,5)P2 as well as NAADP are inhibited by tetrandrine. Its function is as follows. Intracellular channel initially characterized as a non-selective Ca(2+)-permeable channel activated by NAADP (nicotinic acid adenine dinucleotide phosphate), it is also a voltage-gated highly-selective Na(+) channel activated directly by PI(3,5)P2 (phosphatidylinositol 3,5-bisphosphate) that senses pH changes and confers electrical excitability to organelles. Localizes to the early and recycling endosomes membranes where it plays a role in the uptake and processing of proteins and regulates organellar membrane excitability, membrane trafficking and pH homeostasis. Ion selectivity is not fixed but rather agonist-dependent and under defined ionic conditions, can be readily activated by both NAADP and PI(3,5)P2. Required for mTOR-dependent nutrient sensing. The chain is Two pore calcium channel protein 1 (Tpcn1) from Rattus norvegicus (Rat).